The following is a 530-amino-acid chain: Serendipity locus protein alpha (530 aa).

As to expression, transient expression in blastoderm from nuclear cycle 11 to the onset of gastrulation.

The protein localises to the cytoplasm. It is found in the cell membrane. In terms of biological role, required for the cellularization of the syncytial blastoderm embryo. Involved in the localization of the actin filaments just prior to and during plasma membrane invagination. Sry-alpha together with nullo and bnk may provide auxiliary functions, by acting both to stabilize a large and dynamic microfilament structure and regulate its functions. This Drosophila melanogaster (Fruit fly) protein is Serendipity locus protein alpha (Sry-alpha).